The chain runs to 310 residues: ADP-L-glycero-D-manno-heptose-6-epimerase (310 aa).

Residues 10 to 11 (FI), 31 to 32 (DN), Lys38, Lys53, 75 to 79 (EGACS), and Asn92 contribute to the NADP(+) site. Tyr140 (proton acceptor) is an active-site residue. Lys144 contacts NADP(+). Asn169 is a substrate binding site. Residues Val170 and Lys178 each contribute to the NADP(+) site. Lys178 functions as the Proton acceptor in the catalytic mechanism. Substrate-binding positions include Ser180, His187, 201 to 204 (FEGS), and Arg209. The residue at position 267 (Lys267) is an N6-acetyllysine. Tyr272 is a substrate binding site.

It belongs to the NAD(P)-dependent epimerase/dehydratase family. HldD subfamily. Homopentamer. The cofactor is NADP(+).

The enzyme catalyses ADP-D-glycero-beta-D-manno-heptose = ADP-L-glycero-beta-D-manno-heptose. Its pathway is nucleotide-sugar biosynthesis; ADP-L-glycero-beta-D-manno-heptose biosynthesis; ADP-L-glycero-beta-D-manno-heptose from D-glycero-beta-D-manno-heptose 7-phosphate: step 4/4. Its function is as follows. Catalyzes the interconversion between ADP-D-glycero-beta-D-manno-heptose and ADP-L-glycero-beta-D-manno-heptose via an epimerization at carbon 6 of the heptose. The chain is ADP-L-glycero-D-manno-heptose-6-epimerase from Shigella boydii serotype 18 (strain CDC 3083-94 / BS512).